The following is a 102-amino-acid chain: Small ribosomal subunit protein uS10 (102 aa).

Belongs to the universal ribosomal protein uS10 family. Part of the 30S ribosomal subunit.

Its function is as follows. Involved in the binding of tRNA to the ribosomes. This chain is Small ribosomal subunit protein uS10, found in Moorella thermoacetica (strain ATCC 39073 / JCM 9320).